We begin with the raw amino-acid sequence, 352 residues long: DNA polymerase IV (352 aa).

In terms of domain architecture, UmuC spans Ile6 to Gly187. Residues Asp10 and Asp105 each contribute to the Mg(2+) site. Residue Glu106 is part of the active site.

Belongs to the DNA polymerase type-Y family. As to quaternary structure, monomer. Mg(2+) serves as cofactor.

It localises to the cytoplasm. It carries out the reaction DNA(n) + a 2'-deoxyribonucleoside 5'-triphosphate = DNA(n+1) + diphosphate. Its function is as follows. Poorly processive, error-prone DNA polymerase involved in untargeted mutagenesis. Copies undamaged DNA at stalled replication forks, which arise in vivo from mismatched or misaligned primer ends. These misaligned primers can be extended by PolIV. Exhibits no 3'-5' exonuclease (proofreading) activity. May be involved in translesional synthesis, in conjunction with the beta clamp from PolIII. This is DNA polymerase IV from Ectopseudomonas mendocina (strain ymp) (Pseudomonas mendocina).